The chain runs to 552 residues: MSYENLANLIFPNIDKTPEYYFEKYPKRDLKEGAKVLRYAPSPTGFQHIGGVFASLINERLAHQSGGIFYLRIEDTDQKREVEGAIDDTIKTMHNFGMDFDEGITGENSEKGAYAPYKQSQRADIYRAFVKDLLRKGLAYPCFMTSEELEALREKQIAEKLTPGCYGEFAKYRDLSPEEAIKRIEAGENYVIRMKSPGNPEKRVVAHDMIKGEVSFPENLQDVVIIKGDGLPTYHFAHAIDDTLMRTTHVIRGEEWLSSLPIHLQMFEVLGVEAPKYAHIPTIMKMDGSSKRKLSKRKDPESAVSYYSEKGYPSQSVIEYLLNIINSAFEEWRAENPDADYHDYKVELDKMSKSGALFDLVKLNDVSKDVICKMKPEVVYDLYTNWAKEYDKEMYDLVTSKEAMMKEVFNIDKEGPKPRKDFAKWDEVREKIFYFFDELFDKETANDVELPKTLELEEAKRIIEAYEKAYNFNTDKDTWFSDLKEVAVELGYATDRKKYKKNPEEYKGMVSDVAGAVRAALTHRANTPDLYTIMQIMGEEAVRERFKKFLAL.

The 'HIGH' region motif lies at 41–51; the sequence is PSPTGFQHIGG. Positions 293–297 match the 'KMSKS' region motif; that stretch reads KLSKR. Residue K296 coordinates ATP.

The protein belongs to the class-I aminoacyl-tRNA synthetase family. Glutamate--tRNA ligase type 1 subfamily. As to quaternary structure, monomer.

It is found in the cytoplasm. The enzyme catalyses tRNA(Glu) + L-glutamate + ATP = L-glutamyl-tRNA(Glu) + AMP + diphosphate. Its function is as follows. Catalyzes the attachment of glutamate to tRNA(Glu) in a two-step reaction: glutamate is first activated by ATP to form Glu-AMP and then transferred to the acceptor end of tRNA(Glu). This is Glutamate--tRNA ligase from Clostridium perfringens (strain SM101 / Type A).